The sequence spans 314 residues: DNA-directed RNA polymerase subunit alpha (314 aa).

Residues 1–228 (MIEIEKPRIE…EHLNIFVDLT (228 aa)) are alpha N-terminal domain (alpha-NTD). Positions 245-314 (KEKVLEMSIE…DLGLGLRKED (70 aa)) are alpha C-terminal domain (alpha-CTD).

It belongs to the RNA polymerase alpha chain family. Homodimer. The RNAP catalytic core consists of 2 alpha, 1 beta, 1 beta' and 1 omega subunit. When a sigma factor is associated with the core the holoenzyme is formed, which can initiate transcription.

The catalysed reaction is RNA(n) + a ribonucleoside 5'-triphosphate = RNA(n+1) + diphosphate. DNA-dependent RNA polymerase catalyzes the transcription of DNA into RNA using the four ribonucleoside triphosphates as substrates. This Macrococcus caseolyticus (strain JCSC5402) (Macrococcoides caseolyticum) protein is DNA-directed RNA polymerase subunit alpha.